We begin with the raw amino-acid sequence, 45 residues long: Putative metallothionein-like protein 1B (45 aa).

This sequence belongs to the metallothionein superfamily. Type 15 family.

Functionally, metallothioneins have a high content of cysteine residues that bind various heavy metals. Confers tolerance to cadmium (Cd) and plays a role in Cd and zinc (Zn) homeostasis. The protein is Putative metallothionein-like protein 1B (MT1B) of Arabidopsis thaliana (Mouse-ear cress).